The chain runs to 804 residues: Endoplasmin (804 aa).

Residues 1 to 21 (MRVLWVLGLCCVLLTFGFVRA) form the signal peptide. Residues 42-44 (SRT) carry the SRT pseudosubstrate motif motif. Asn-62 carries an N-linked (GlcNAc...) asparagine glycan. Ser-64 bears the Phosphoserine mark. The N-linked (GlcNAc...) asparagine glycan is linked to Asn-107. ATP is bound by residues Asn-107, Asp-149, and Asn-162. Lys-168 is modified (N6-(2-hydroxyisobutyryl)lysine). Ser-172 carries the phosphoserine modification. Phe-199 serves as a coordination point for ATP. N-linked (GlcNAc...) asparagine glycosylation is present at Asn-217. The tract at residues 288-323 (TVEEPLEEDETAQEEKEEADDEAAVEEEEEEKKPKT) is disordered. Acidic residues predominate over residues 289–317 (VEEPLEEDETAQEEKEEADDEAAVEEEEE). Ser-403 is subject to Phosphoserine. Position 404 is an N6-succinyllysine (Lys-404). N-linked (GlcNAc...) asparagine glycosylation occurs at Asn-445. Ser-447 carries the phosphoserine modification. Lys-479 is modified (N6-acetyllysine). Asn-481 and Asn-502 each carry an N-linked (GlcNAc...) asparagine glycan. Position 633 is an N6-succinyllysine (Lys-633). Residues 749-804 (IDPEAQVEEEPEEEPEDTTEDTTDDSEQDEEETDAGAEEEEEEQETEKEPTEKDEL) are disordered. Residues 753–794 (AQVEEEPEEEPEDTTEDTTDDSEQDEEETDAGAEEEEEEQET) show a composition bias toward acidic residues. The segment covering 795–804 (EKEPTEKDEL) has biased composition (basic and acidic residues). Residues 801 to 804 (KDEL) carry the Prevents secretion from ER motif.

The protein belongs to the heat shock protein 90 family. As to quaternary structure, homodimer; disulfide-linked. Component of an EIF2 complex at least composed of CELF1/CUGBP1, CALR, CALR3, EIF2S1, EIF2S2, HSP90B1 and HSPA5. Part of a large chaperone multiprotein complex comprising DNAJB11, HSP90B1, HSPA5, HYOU, PDIA2, PDIA4, PDIA6, PPIB, SDF2L1, UGGT1 and very small amounts of ERP29, but not, or at very low levels, CALR nor CANX. Interacts with AIMP1; regulates its retention in the endoplasmic reticulum. Hyperglycosylated form interacts with OS9; promoting its degradation by the endoplasmic reticulum associated degradation (ERAD). Interacts with CNPY3. This interaction is disrupted in the presence of ATP. Interacts with TLR4 and TLR9, but not with TLR3. Interacts with MZB1 in a calcium-dependent manner. Interacts with METTL23. Interacts with IL1B; the interaction facilitates cargo translocation into the ERGIC. Interacts with EIF2AK3. Phosphorylated by CK2. Post-translationally, N-glycosylated cotranslationally at Asn-217 by STT3A-containing OST-A complex: this glycosylation is constitutive. In response to various stress, 5 additional facultative sites (Asn-62, Asn-107, Asn-445, Asn-481 and Asn-502) can be glycosylated post-translationally by STT3B-containing OST-B complex, leading to a hyperglycosylated form that is degraded by the ER-associated degradation (ERAD) pathway. In normal conditions, the OST-A complex together with CCDC134 prevent glycosylation at facultative sites during protein folding, thereby preventing hyperglycosylation. Mechanistically, nascent HSP90B1 is tethered during translation to a specialized CCDC134-containing translocon that forms a microenvironment for its folding, in which STT3A associates with the SRT pseudosubstrate motif, and prevents access to facultative glycosylation sites until folding is completed, rendering its facultative sites inaccessible to the OST-B complex.

It is found in the endoplasmic reticulum lumen. The protein localises to the sarcoplasmic reticulum lumen. Its subcellular location is the melanosome. The catalysed reaction is ATP + H2O = ADP + phosphate + H(+). In terms of biological role, ATP-dependent chaperone involved in the processing of proteins in the endoplasmic reticulum, regulating their transport. Together with MESD, acts as a modulator of the Wnt pathway by promoting the folding of LRP6, a coreceptor of the canonical Wnt pathway. When associated with CNPY3, required for proper folding of Toll-like receptors. Promotes folding and trafficking of TLR4 to the cell surface. May participate in the unfolding of cytosolic leaderless cargos (lacking the secretion signal sequence) such as the interleukin 1/IL-1 to facilitate their translocation into the ERGIC (endoplasmic reticulum-Golgi intermediate compartment) and secretion; the translocation process is mediated by the cargo receptor TMED10. The chain is Endoplasmin from Rattus norvegicus (Rat).